Here is a 408-residue protein sequence, read N- to C-terminus: Glutamate N-acetyltransferase (408 aa).

Residues Thr-150, Lys-176, Thr-189, Glu-271, Asn-403, and Thr-408 each contribute to the substrate site. Thr-189 acts as the Nucleophile in catalysis.

Belongs to the ArgJ family. Heterotetramer of two alpha and two beta chains.

The protein resides in the cytoplasm. The catalysed reaction is N(2)-acetyl-L-ornithine + L-glutamate = N-acetyl-L-glutamate + L-ornithine. The protein operates within amino-acid biosynthesis; L-arginine biosynthesis; L-ornithine and N-acetyl-L-glutamate from L-glutamate and N(2)-acetyl-L-ornithine (cyclic): step 1/1. Its function is as follows. Catalyzes the transfer of the acetyl group from N(2)-acetylornithine to glutamate, forming N-acetylglutamate and L-ornithine. This chain is Glutamate N-acetyltransferase, found in Methanococcus maripaludis (strain C7 / ATCC BAA-1331).